The sequence spans 561 residues: 2-succinyl-5-enolpyruvyl-6-hydroxy-3-cyclohexene-1-carboxylate synthase (561 aa).

It belongs to the TPP enzyme family. MenD subfamily. Homodimer. Mg(2+) serves as cofactor. It depends on Mn(2+) as a cofactor. Requires thiamine diphosphate as cofactor.

The catalysed reaction is isochorismate + 2-oxoglutarate + H(+) = 5-enolpyruvoyl-6-hydroxy-2-succinyl-cyclohex-3-ene-1-carboxylate + CO2. It functions in the pathway quinol/quinone metabolism; 1,4-dihydroxy-2-naphthoate biosynthesis; 1,4-dihydroxy-2-naphthoate from chorismate: step 2/7. Its pathway is cofactor biosynthesis; phylloquinone biosynthesis. Catalyzes the thiamine diphosphate-dependent decarboxylation of 2-oxoglutarate and the subsequent addition of the resulting succinic semialdehyde-thiamine pyrophosphate anion to isochorismate to yield 2-succinyl-5-enolpyruvyl-6-hydroxy-3-cyclohexene-1-carboxylate (SEPHCHC). The protein is 2-succinyl-5-enolpyruvyl-6-hydroxy-3-cyclohexene-1-carboxylate synthase of Synechococcus sp. (strain CC9605).